Reading from the N-terminus, the 250-residue chain is NAD-dependent protein deacetylase (250 aa).

One can recognise a Deacetylase sirtuin-type domain in the interval Met1 to Gln244. Residues Ala22, Thr26, Phe33, Arg34, Gln98, Ile100, Asp101, and His116 each coordinate NAD(+). Phe33 serves as a coordination point for nicotinamide. Positions 100 and 101 each coordinate nicotinamide. Catalysis depends on His116, which acts as the Proton acceptor. Positions 124, 127, 149, and 151 each coordinate Zn(2+). Residues Ser187, Ser188, Asn212, and Val230 each coordinate NAD(+).

It belongs to the sirtuin family. Class U subfamily. The cofactor is Zn(2+).

It is found in the cytoplasm. The catalysed reaction is N(6)-acetyl-L-lysyl-[protein] + NAD(+) + H2O = 2''-O-acetyl-ADP-D-ribose + nicotinamide + L-lysyl-[protein]. Its function is as follows. NAD-dependent protein deacetylase which modulates the activities of several enzymes which are inactive in their acetylated form. Deacetylates the N-terminal lysine residue of Alba, the major archaeal chromatin protein and that, in turn, increases Alba's DNA binding affinity, thereby repressing transcription. This is NAD-dependent protein deacetylase from Sulfurisphaera tokodaii (strain DSM 16993 / JCM 10545 / NBRC 100140 / 7) (Sulfolobus tokodaii).